The sequence spans 316 residues: UPF0613 protein PB24D3.06c (316 aa).

The protein belongs to the UPF0613 family.

It localises to the cytoplasm. The protein resides in the nucleus. The polypeptide is UPF0613 protein PB24D3.06c (Schizosaccharomyces pombe (strain 972 / ATCC 24843) (Fission yeast)).